The sequence spans 514 residues: Xylose import ATP-binding protein XylG (514 aa).

2 consecutive ABC transporter domains span residues 7 to 246 (FEMR…VGRE) and 263 to 508 (LEAR…IHAE). Residue 39–46 (GENGAGKS) coordinates ATP.

Belongs to the ABC transporter superfamily. Xylose importer (TC 3.A.1.2.4) family. In terms of assembly, the complex is composed of two ATP-binding proteins (XylG), two transmembrane proteins (XylH) and a solute-binding protein (XylF).

It is found in the cell inner membrane. It catalyses the reaction D-xylose(out) + ATP + H2O = D-xylose(in) + ADP + phosphate + H(+). Part of the ABC transporter complex XylFGH involved in xylose import. Responsible for energy coupling to the transport system. The sequence is that of Xylose import ATP-binding protein XylG from Ralstonia nicotianae (strain ATCC BAA-1114 / GMI1000) (Ralstonia solanacearum).